The sequence spans 350 residues: Probable sugar phosphate/phosphate translocator At4g32390 (350 aa).

Helical transmembrane passes span 15–35, 49–69, 89–109, 112–132, 146–166, 168–188, 205–225, 235–255, 263–283, and 286–306; these read ILLS…VIVY, FPIT…VILI, VVPI…AYIY, VSFI…IGVL, MLSI…FDTW, VMLQ…IQIL, VAPC…LPIL, FVIF…VFLL, TMNV…WSVI, and TVTP…AYYN. Positions 38 to 155 constitute an EamA domain; that stretch reads YILDKKMYNW…MLSISFGVAI (118 aa). Positions 324–350 are disordered; sequence QGDEEEAGKLLEERESEAAAKRNETED.

Belongs to the TPT transporter family. TPT (TC 2.A.7.9) subfamily.

The protein localises to the membrane. The protein is Probable sugar phosphate/phosphate translocator At4g32390 of Arabidopsis thaliana (Mouse-ear cress).